A 730-amino-acid polypeptide reads, in one-letter code: 1,4-alpha-glucan branching enzyme GlgB (730 aa).

Asp405 functions as the Nucleophile in the catalytic mechanism. Catalysis depends on Glu458, which acts as the Proton donor.

This sequence belongs to the glycosyl hydrolase 13 family. GlgB subfamily. Monomer.

It catalyses the reaction Transfers a segment of a (1-&gt;4)-alpha-D-glucan chain to a primary hydroxy group in a similar glucan chain.. It participates in glycan biosynthesis; glycogen biosynthesis. Catalyzes the formation of the alpha-1,6-glucosidic linkages in glycogen by scission of a 1,4-alpha-linked oligosaccharide from growing alpha-1,4-glucan chains and the subsequent attachment of the oligosaccharide to the alpha-1,6 position. The chain is 1,4-alpha-glucan branching enzyme GlgB from Haemophilus influenzae (strain 86-028NP).